The primary structure comprises 641 residues: Chaperone protein DnaK 2 (641 aa).

T199 carries the post-translational modification Phosphothreonine; by autocatalysis. Residues 601 to 616 (MAQQQAQAQHAQSSQQ) are compositionally biased toward low complexity. Residues 601 to 641 (MAQQQAQAQHAQSSQQTNDTTGQSSTDDDVFEAEFEEVKDK) are disordered. Positions 626 to 635 (TDDDVFEAEF) are enriched in acidic residues.

The protein belongs to the heat shock protein 70 family.

Acts as a chaperone. This chain is Chaperone protein DnaK 2, found in Photobacterium profundum (strain SS9).